The primary structure comprises 391 residues: F-box protein At2g34280 (391 aa).

The F-box domain occupies 1-43 (MDLLPYDVVEHILERLDVKSLLNCKSVSKQWRSTIRCRAFQER).

The chain is F-box protein At2g34280 from Arabidopsis thaliana (Mouse-ear cress).